The chain runs to 77 residues: MSAKEIIGIVITKSLDKTAIVKTQSKSSHERYVKIIKKVKKYTVHDRENISRVGDKVIILQTRPLSKTKRWVIKSIL.

It belongs to the universal ribosomal protein uS17 family. Part of the 30S ribosomal subunit.

It is found in the plastid. The protein resides in the chloroplast. One of the primary rRNA binding proteins, it binds specifically to the 5'-end of 16S ribosomal RNA. The sequence is that of Small ribosomal subunit protein uS17c (rps17) from Cyanidium caldarium (Red alga).